Consider the following 102-residue polypeptide: Large ribosomal subunit protein bL21 (102 aa).

This sequence belongs to the bacterial ribosomal protein bL21 family. As to quaternary structure, part of the 50S ribosomal subunit. Contacts protein L20.

In terms of biological role, this protein binds to 23S rRNA in the presence of protein L20. The protein is Large ribosomal subunit protein bL21 of Leptospira biflexa serovar Patoc (strain Patoc 1 / Ames).